We begin with the raw amino-acid sequence, 4678 residues long: E3 ubiquitin-protein ligase MYCBP2 (4678 aa).

Disordered stretches follow at residues 87–127, 172–192, and 609–628; these read DRDQ…RSKS, SKNS…SKEP, and ASKG…KPYK. Over residues 100 to 124 the composition is skewed to basic residues; that stretch reads SRNKKILNKKKLKRKQKSKSKVKTR. Residues Ser-127, Ser-178, Ser-181, and Ser-183 each carry the phosphoserine modification. RCC1 repeat units follow at residues 600-655, 699-755, 907-957, 958-1008, and 1010-1066; these read DGSI…VISK, NGEV…MMCP, KRDK…VLME, NGDV…VLLM, and GQVF…LRID. Residues 898 to 910 show a composition bias toward basic residues; it reads RSHPAQLKHKRDK. The interval 898 to 928 is disordered; it reads RSHPAQLKHKRDKHKDGSGERGEKDASKITT. Positions 911–924 are enriched in basic and acidic residues; the sequence is HKDGSGERGEKDAS. The segment at 1235–1386 is PHR domain 1; it reads NRFESHGGGW…GQIPQLLYRL (152 aa). Phosphoserine is present on Ser-1624. A PHR domain 2 region spans residues 1726-1884; that stretch reads NRFTKTSQGR…GQIPQILYYR (159 aa). Cysteines 1748 and 1863 form a disulfide. Disordered stretches follow at residues 1993–2012 and 2321–2340; these read FNPN…QGLS and QQDQ…VTAA. Polar residues predominate over residues 1994-2012; the sequence is NPNQSTDSTTGNQPEQGLS. Positions 2022-2550 are RAE1 binding; the sequence is VIESEHPYKP…NQHLGKSLLV (529 aa). The stretch at 2341 to 2443 is one Filamin repeat; it reads SSNTDMTYGG…IDAGLEVKVK (103 aa). Residue Thr-2683 is modified to Phosphothreonine. Disordered stretches follow at residues 2709–2931, 2943–2963, 2979–3020, and 3066–3085; these read LGNS…LHSE, TNSL…VDEG, EQEM…EPAK, and APIR…ETKL. A compositionally biased stretch (polar residues) spans 2718–2733; that stretch reads NISTSSKPASTSGKSE. The span at 2742 to 2760 shows a compositional bias: basic and acidic residues; that stretch reads LKPDGRMSRTTADQKKPRG. Position 2769 is a phosphoserine (Ser-2769). Positions 2775-2785 are enriched in basic and acidic residues; that stretch reads DAAKLRSDSHS. Over residues 2786 to 2810 the composition is skewed to polar residues; that stretch reads RSLSPNHNTLQTLKSDGRMPSSSRA. Ser-2787, Ser-2789, Ser-2833, Ser-2839, Ser-2869, Ser-2871, and Ser-2920 each carry phosphoserine. The span at 2828-2843 shows a compositional bias: low complexity; that stretch reads PANRSSPSGASSPRSS. Residues 2860 to 2871 are compositionally biased toward basic and acidic residues; the sequence is TKLDPPRERSKS. At Ser-2985 the chain carries Phosphoserine. The segment covering 2988–3001 has biased composition (basic residues); it reads ISRKCANRHTRPKK. Phosphoserine occurs at positions 3090, 3478, and 3505. A disordered region spans residues 3605-3631; the sequence is PVEPEEEEDEENKTSKENSEQEKDTRV. Residues 3616 to 3631 show a composition bias toward basic and acidic residues; it reads NKTSKENSEQEKDTRV. The DOC domain maps to 3719 to 3897; sequence SISIQSGFEA…VAQQRNCEAE (179 aa). Residues 3915-3934 form a disordered region; it reads SGDAEPTPEQEEKALLSSPE. Thr-3921 carries the post-translational modification Phosphothreonine. Residues Ser-3931 and Ser-3932 each carry the phosphoserine modification. 10 residues coordinate Zn(2+): Cys-4428, Cys-4431, Cys-4446, His-4448, His-4451, Cys-4454, Cys-4475, Cys-4478, Cys-4544, and Cys-4547. The segment at 4428–4479 adopts an RING-type; atypical zinc-finger fold; it reads CMICFTEALSAAPAIQLDCSHIFHLQCCRRVLENRWLGPRITFGFISCPICK. The interval 4539–4676 is tandem cysteine domain; that stretch reads YAYYVCYKCR…LGCGVCRNAH (138 aa). The active site involves Cys-4558. 7 residues coordinate Zn(2+): Cys-4575, Cys-4578, Cys-4587, His-4590, Cys-4599, Cys-4602, and Cys-4603. Residue Cys-4610 is part of the active site. Positions 4617, 4620, 4638, 4652, 4658, 4669, and 4672 each coordinate Zn(2+).

Belongs to the RING-Cys relay (RCR) family. Interacts with MYC. Interacts with TSC2 (tuberin) when TSC2 is in complex with TSC1 (hamartin). Interacts with FBXO45. Interacts with RAE1. Interacts with CPNE1 (via VWFA domain) and CPNE4 (via VWFA domain). Interacts with (sumoylated) RANGAP1; interaction with sumoylated RANGAP1 inhibits E3 ubiquitin-protein ligase activity and promotes MYCBP2 translocation to the nucleus. Interacts with RAN. Interacts with ATP13A2; the interaction inhibits the ubiquitination of TSC2 by MYCBP2. Interacts with USP11. In terms of processing, autoubiquitinated. As to expression, expressed in all tissues examined, expression is exceptionally abundant in brain and thymus. Colocalizes with TSC1 and TSC2 along the neurites and in the growth cones. Highly expressed in peripheral and central neurons. Colocalized with TSC1 in one of the filopodial extensions at the tip of a growth cone.

The protein localises to the nucleus. Its subcellular location is the cell projection. It localises to the axon. The protein resides in the cytoplasm. It is found in the cytoskeleton. The enzyme catalyses [E2 ubiquitin-conjugating enzyme]-S-ubiquitinyl-L-cysteine + [acceptor protein]-L-threonine = [E2 ubiquitin-conjugating enzyme]-L-cysteine + [acceptor protein]-3-O-ubiquitinyl-L-threonine.. It functions in the pathway protein modification; protein ubiquitination. In terms of biological role, atypical E3 ubiquitin-protein ligase which specifically mediates ubiquitination of threonine and serine residues on target proteins, instead of ubiquitinating lysine residues. Shows esterification activity towards both threonine and serine, with a preference for threonine, and acts via two essential catalytic cysteine residues that relay ubiquitin to its substrate via thioester intermediates. Interacts with the E2 enzymes UBE2D1, UBE2D3, UBE2E1 and UBE2L3. Plays a key role in neural development, probably by mediating ubiquitination of threonine residues on target proteins. Involved in different processes such as regulation of neurite outgrowth, synaptic growth, synaptogenesis and axon degeneration. Required for the formation of major central nervous system axon tracts. Required for proper axon growth by regulating axon navigation and axon branching: acts by regulating the subcellular location and stability of MAP3K12/DLK. Required for proper localization of retinogeniculate projections but not for eye-specific segregation. Regulates axon guidance in the olfactory system. Involved in Wallerian axon degeneration, an evolutionarily conserved process that drives the loss of damaged axons: acts by promoting destabilization of NMNAT2, probably via ubiquitination of NMNAT2. Catalyzes ubiquitination of threonine and/or serine residues on NMNAT2, consequences of threonine and/or serine ubiquitination are however unknown. Regulates the internalization of TRPV1 in peripheral sensory neurons. Mediates ubiquitination and subsequent proteasomal degradation of TSC2/tuberin. Independently of the E3 ubiquitin-protein ligase activity, also acts as a guanosine exchange factor (GEF) for RAN in neurons of dorsal root ganglia. May function as a facilitator or regulator of transcriptional activation by MYC. Acts in concert with HUWE1 to regulate the circadian clock gene expression by promoting the lithium-induced ubiquination and degradation of NR1D1. The chain is E3 ubiquitin-protein ligase MYCBP2 from Homo sapiens (Human).